Here is a 508-residue protein sequence, read N- to C-terminus: UDP-N-acetylmuramyl-tripeptide synthetase (508 aa).

Ser-35 provides a ligand contact to UDP-N-acetyl-alpha-D-muramoyl-L-alanyl-D-glutamate. An ATP-binding site is contributed by 118–124 (GTDGKSS). UDP-N-acetyl-alpha-D-muramoyl-L-alanyl-D-glutamate contacts are provided by residues 163 to 164 (ST), Thr-190, and Arg-200. The residue at position 232 (Lys-232) is an N6-carboxylysine.

Belongs to the MurCDEF family. MurE subfamily. In terms of processing, carboxylation is probably crucial for Mg(2+) binding and, consequently, for the gamma-phosphate positioning of ATP.

The protein localises to the cytoplasm. The protein operates within cell wall biogenesis; peptidoglycan biosynthesis. Functionally, catalyzes the addition of an amino acid to the nucleotide precursor UDP-N-acetylmuramoyl-L-alanyl-D-glutamate (UMAG) in the biosynthesis of bacterial cell-wall peptidoglycan. This chain is UDP-N-acetylmuramyl-tripeptide synthetase, found in Borrelia garinii subsp. bavariensis (strain ATCC BAA-2496 / DSM 23469 / PBi) (Borreliella bavariensis).